A 331-amino-acid polypeptide reads, in one-letter code: Tagatose 1,6-diphosphate aldolase 2 (331 aa).

Belongs to the aldolase LacD family.

It carries out the reaction D-tagatofuranose 1,6-bisphosphate = D-glyceraldehyde 3-phosphate + dihydroxyacetone phosphate. It participates in carbohydrate metabolism; D-tagatose 6-phosphate degradation; D-glyceraldehyde 3-phosphate and glycerone phosphate from D-tagatose 6-phosphate: step 2/2. In Enterococcus faecalis (strain ATCC 700802 / V583), this protein is Tagatose 1,6-diphosphate aldolase 2 (lacD2).